The chain runs to 143 residues: Large ribosomal subunit protein uL13 (143 aa).

This sequence belongs to the universal ribosomal protein uL13 family. As to quaternary structure, part of the 50S ribosomal subunit.

This protein is one of the early assembly proteins of the 50S ribosomal subunit, although it is not seen to bind rRNA by itself. It is important during the early stages of 50S assembly. This chain is Large ribosomal subunit protein uL13, found in Clostridioides difficile (strain 630) (Peptoclostridium difficile).